A 621-amino-acid chain; its full sequence is Chaperone protein HtpG (621 aa).

The tract at residues 1 to 325 (MTDASVKETF…SQDLSLNVSR (325 aa)) is a; substrate-binding. The segment at 326–541 (EMLQSDPKLA…EGDIDVNLER (216 aa)) is b. A c region spans residues 542-621 (MLKRHGQLQD…RLGSVMDSAL (80 aa)).

Belongs to the heat shock protein 90 family. In terms of assembly, homodimer.

The protein resides in the cytoplasm. Molecular chaperone. Has ATPase activity. The chain is Chaperone protein HtpG from Roseobacter denitrificans (strain ATCC 33942 / OCh 114) (Erythrobacter sp. (strain OCh 114)).